The sequence spans 270 residues: Cell surface glycoprotein CD200 receptor 5 (270 aa).

The signal sequence occupies residues 1 to 25 (MHALGRTPALTLLIFINIFVSGSRC). Over 26–241 (TDKNQTIQND…STTTTTSLLT (216 aa)) the chain is Extracellular. The 107-residue stretch at 39-145 (PLTQVNTTVS…GNFGRVYDLQ (107 aa)) folds into the Ig-like V-type domain. N44 is a glycosylation site (N-linked (GlcNAc...) asparagine). 2 disulfides stabilise this stretch: C59-C129 and C164-C213. One can recognise an Ig-like C2-type domain in the interval 134–229 (PEGNFGRVYD…GNKSLFIELN (96 aa)). 2 N-linked (GlcNAc...) asparagine glycosylation sites follow: N192 and N221. A helical membrane pass occupies residues 242-262 (ILYVKMVLLGIILLHVGFAFF). The Cytoplasmic segment spans residues 263-270 (QKRNVIRT).

It belongs to the CD200R family.

It localises to the membrane. Functionally, may not be a receptor for the CD200/OX2 cell surface glycoprotein. In Mus musculus (Mouse), this protein is Cell surface glycoprotein CD200 receptor 5 (Cd200r5).